The sequence spans 88 residues: Protein transport protein Sec61 subunit beta (88 aa).

The disordered stretch occupies residues 1-41 (MDSSVPGGQRTLQKRRNAQLQKEKKANQTPASPRQAGFGGS). Residues 1–60 (MDSSVPGGQRTLQKRRNAQLQKEKKANQTPASPRQAGFGGSSSSILKLYTDEANGLRVDP) lie on the Cytoplasmic side of the membrane. A helical transmembrane segment spans residues 61–81 (LVVLFLAVAFVFSVVALHVVA).

The protein belongs to the SEC61-beta family. In terms of assembly, heterotrimeric complex composed of SEC61, SEB1 and SSS1.

Its subcellular location is the endoplasmic reticulum membrane. In terms of biological role, necessary for protein translocation in the endoplasmic reticulum. This chain is Protein transport protein Sec61 subunit beta (SBH1), found in Kluyveromyces lactis (strain ATCC 8585 / CBS 2359 / DSM 70799 / NBRC 1267 / NRRL Y-1140 / WM37) (Yeast).